The chain runs to 572 residues: 2-isopropylmalate synthase (572 aa).

A Pyruvate carboxyltransferase domain is found at Pro-31–Asn-305. Asp-40, His-244, His-246, and Asn-280 together coordinate Mg(2+). A regulatory domain region spans residues Asn-437–Val-572.

It belongs to the alpha-IPM synthase/homocitrate synthase family. LeuA type 2 subfamily. Homodimer. Mg(2+) is required as a cofactor.

It localises to the cytoplasm. The enzyme catalyses 3-methyl-2-oxobutanoate + acetyl-CoA + H2O = (2S)-2-isopropylmalate + CoA + H(+). It functions in the pathway amino-acid biosynthesis; L-leucine biosynthesis; L-leucine from 3-methyl-2-oxobutanoate: step 1/4. Functionally, catalyzes the condensation of the acetyl group of acetyl-CoA with 3-methyl-2-oxobutanoate (2-ketoisovalerate) to form 3-carboxy-3-hydroxy-4-methylpentanoate (2-isopropylmalate). The chain is 2-isopropylmalate synthase from Paraburkholderia phytofirmans (strain DSM 17436 / LMG 22146 / PsJN) (Burkholderia phytofirmans).